A 335-amino-acid chain; its full sequence is Pharynx and intestine in excess protein 1 (335 aa).

Residue Lys68 forms a Glycyl lysine isopeptide (Lys-Gly) (interchain with G-Cter in SUMO) linkage. The C3H1-type 1 zinc finger occupies Glu98–Asp126. Over residues Val130–Val156 the composition is skewed to basic and acidic residues. The tract at residues Val130–Gln188 is disordered. Composition is skewed to polar residues over residues Thr158–Ala167 and Pro177–Arg187. The segment at Ser184–Gln211 adopts a C3H1-type 2 zinc-finger fold. Positions Met288–Thr291 are required for inhibition of Ser-2 phosphorylation.

As to quaternary structure, interacts with hda-1, let-418 and mep-1. Interacts (via C terminus) with cit-1.1 (via C terminus). Post-translationally, sumoylated in adult germ cells.

The protein resides in the nucleus. It is found in the cytoplasm. It localises to the cytoskeleton. Its subcellular location is the microtubule organizing center. The protein localises to the centrosome. The protein resides in the spindle. It is found in the cytoplasmic granule. Maternally provided pie-1 is required for germline cell fate determination. Functions as a repressor of RNA polymerase II-dependent gene expression in the developing germline. Required for expression of nos-2 in P4 germline blastomere cells. Inhibits the histone deacetylase activity of hda-1. Represses transcriptional activation of cdk-9 and cit-1.1, which are members of the P-TEFb complex. Acts redundantly with gei-17 to promote piRNA-mediated silencing and fertility in adult germline. Promotes the sumoylation of hda-1 in adult animals but not in embryos thereby regulating its interaction with mep-1. The chain is Pharynx and intestine in excess protein 1 from Caenorhabditis elegans.